The chain runs to 404 residues: Serine/threonine transporter SstT (404 aa).

A run of 9 helical transmembrane segments spans residues 12–32, 53–73, 81–101, 140–160, 177–197, 216–236, 287–307, 329–349, and 356–376; these read GGNL…LALV, AIAP…KEVG, ILVM…VLSF, ALAN…GIAL, AVSF…FGLV, LGVL…LIVF, VAIP…VTVL, IVAS…LLLI, and FNIP…IGVI.

This sequence belongs to the dicarboxylate/amino acid:cation symporter (DAACS) (TC 2.A.23) family.

The protein resides in the cell inner membrane. The catalysed reaction is L-serine(in) + Na(+)(in) = L-serine(out) + Na(+)(out). It catalyses the reaction L-threonine(in) + Na(+)(in) = L-threonine(out) + Na(+)(out). Involved in the import of serine and threonine into the cell, with the concomitant import of sodium (symport system). The polypeptide is Serine/threonine transporter SstT (Actinobacillus pleuropneumoniae serotype 7 (strain AP76)).